The chain runs to 382 residues: Galactokinase (382 aa).

34-37 (EHTD) is a substrate binding site. 124–130 (GAGLSSS) lines the ATP pocket. Serine 130 and glutamate 162 together coordinate Mg(2+). Aspartate 174 acts as the Proton acceptor in catalysis. Residue tyrosine 223 coordinates substrate.

It belongs to the GHMP kinase family. GalK subfamily.

The protein resides in the cytoplasm. It catalyses the reaction alpha-D-galactose + ATP = alpha-D-galactose 1-phosphate + ADP + H(+). Its pathway is carbohydrate metabolism; galactose metabolism. Its function is as follows. Catalyzes the transfer of the gamma-phosphate of ATP to D-galactose to form alpha-D-galactose-1-phosphate (Gal-1-P). The protein is Galactokinase of Citrobacter koseri (strain ATCC BAA-895 / CDC 4225-83 / SGSC4696).